The sequence spans 190 residues: Elongation factor P-like protein (190 aa).

Belongs to the elongation factor P family.

This Yersinia pestis bv. Antiqua (strain Antiqua) protein is Elongation factor P-like protein.